The chain runs to 399 residues: Serine palmitoyltransferase (399 aa).

Pyridoxal 5'-phosphate-binding positions include 113–114, histidine 213, threonine 241, and serine 243; that span reads GF. Lysine 244 carries the N6-(pyridoxal phosphate)lysine modification.

The protein belongs to the class-II pyridoxal-phosphate-dependent aminotransferase family. In terms of assembly, homodimer. It depends on pyridoxal 5'-phosphate as a cofactor.

The protein resides in the cytoplasm. It carries out the reaction L-serine + hexadecanoyl-CoA + H(+) = 3-oxosphinganine + CO2 + CoA. Its pathway is lipid metabolism; sphingolipid metabolism. In terms of biological role, catalyzes the condensation of L-serine with palmitoyl-CoA (hexadecanoyl-CoA) to produce 3-oxosphinganine. This is Serine palmitoyltransferase from Sphingobacterium spiritivorum (Flavobacterium spiritivorum).